A 353-amino-acid chain; its full sequence is DNA integrity scanning protein DisA (353 aa).

The region spanning 6 to 144 (DKELMNILKI…GGIKYVLRDS (139 aa)) is the DAC domain. ATP-binding positions include Gly-73, Leu-91, and 104–108 (TRHRT).

Belongs to the DisA family. In terms of assembly, homooctamer. The cofactor is Mg(2+).

The catalysed reaction is 2 ATP = 3',3'-c-di-AMP + 2 diphosphate. In terms of biological role, participates in a DNA-damage check-point that is active prior to asymmetric division when DNA is damaged. DisA forms globular foci that rapidly scan along the chromosomes during sporulation, searching for lesions. When a lesion is present, DisA pauses at the lesion site. This triggers a cellular response that culminates in a temporary block in sporulation initiation. Functionally, also has diadenylate cyclase activity, catalyzing the condensation of 2 ATP molecules into cyclic di-AMP (c-di-AMP). c-di-AMP acts as a signaling molecule that couples DNA integrity with progression of sporulation. The rise in c-di-AMP level generated by DisA while scanning the chromosome, operates as a positive signal that advances sporulation; upon encountering a lesion, the DisA focus arrests at the damaged site and halts c-di-AMP synthesis. In Clostridium botulinum (strain Kyoto / Type A2), this protein is DNA integrity scanning protein DisA.